We begin with the raw amino-acid sequence, 167 residues long: cAMP-dependent protein kinase type I-alpha regulatory subunit (167 aa).

Thr12 is modified (phosphothreonine). 2 positions are modified to phosphoserine: Ser14 and Ser20. A Pseudophosphorylation motif motif is present at residues 30–33; that stretch reads RGAI. Ser34 is subject to Phosphoserine. 3',5'-cyclic AMP contacts are provided by residues 51-78, 79-167, Glu147, and Arg156; these read LFSH…SKVS and ILES…ILKR. The residue at position 82 (Ser82) is a Phosphoserine.

It belongs to the cAMP-dependent kinase regulatory chain family. The inactive holoenzyme is composed of two regulatory chains and two catalytic chains. Activation by cAMP releases the two active catalytic monomers and the regulatory dimer. Interacts with PRKACA and PRKACB. PRKAR1A also interacts with RFC2; the complex may be involved in cell survival. Interacts with AKAP4. Interacts with RARA; the interaction occurs in the presence of cAMP or FSH and regulates RARA transcriptional activity. Interacts with the phosphorylated form of PJA2. Interacts with CBFA2T3. Interacts with PRKX; regulates this cAMP-dependent protein kinase. Interacts with smAKAP; this interaction may target PRKAR1A to the plasma membrane. Interacts with AICDA. The pseudophosphorylation site binds to the substrate-binding region of the catalytic chain, resulting in the inhibition of its activity.

The protein resides in the cell membrane. Functionally, regulatory subunit of the cAMP-dependent protein kinases involved in cAMP signaling in cells. The sequence is that of cAMP-dependent protein kinase type I-alpha regulatory subunit from Mesocricetus auratus (Golden hamster).